The primary structure comprises 1097 residues: DNA-directed RNA polymerase subunit beta (1097 aa).

A disordered region spans residues 1073–1097 (DVNPRRSTPSRPTYESLGVADYDED).

The protein belongs to the RNA polymerase beta chain family. In cyanobacteria the RNAP catalytic core is composed of 2 alpha, 1 beta, 1 beta', 1 gamma and 1 omega subunit. When a sigma factor is associated with the core the holoenzyme is formed, which can initiate transcription.

It catalyses the reaction RNA(n) + a ribonucleoside 5'-triphosphate = RNA(n+1) + diphosphate. Functionally, DNA-dependent RNA polymerase catalyzes the transcription of DNA into RNA using the four ribonucleoside triphosphates as substrates. This is DNA-directed RNA polymerase subunit beta from Synechococcus sp. (strain RCC307).